Reading from the N-terminus, the 387-residue chain is 3-dehydroquinate synthase (387 aa).

This sequence belongs to the archaeal-type DHQ synthase family.

The enzyme catalyses 2-amino-2,3,7-trideoxy-D-lyxo-hept-6-ulosonate + NAD(+) + H2O = 3-dehydroquinate + NH4(+) + NADH + H(+). Functionally, catalyzes the oxidative deamination and cyclization of 2-amino-3,7-dideoxy-D-threo-hept-6-ulosonic acid (ADH) to yield 3-dehydroquinate (DHQ), which is fed into the canonical shikimic pathway of aromatic amino acid biosynthesis. This Halobacterium salinarum (strain ATCC 29341 / DSM 671 / R1) protein is 3-dehydroquinate synthase.